Consider the following 91-residue polypeptide: Protein sigN139 (91 aa).

N23 and N34 each carry an N-linked (GlcNAc...) asparagine glycan. Residues 46–68 traverse the membrane as a helical segment; sequence LLPVVAFISGTVTSITGLVAGAL.

The protein localises to the membrane. In Dictyostelium discoideum (Social amoeba), this protein is Protein sigN139.